Consider the following 264-residue polypeptide: Thymidylate synthase 2 (264 aa).

A dUMP-binding site is contributed by R21. H51 serves as a coordination point for (6R)-5,10-methylene-5,6,7,8-tetrahydrofolate. Position 126–127 (R126–R127) interacts with dUMP. The active-site Nucleophile is C146. Residues R166–D169, N177, and H207–Y209 each bind dUMP. D169 contacts (6R)-5,10-methylene-5,6,7,8-tetrahydrofolate. S263 is a binding site for (6R)-5,10-methylene-5,6,7,8-tetrahydrofolate.

This sequence belongs to the thymidylate synthase family. Bacterial-type ThyA subfamily. As to quaternary structure, homodimer.

Its subcellular location is the cytoplasm. It catalyses the reaction dUMP + (6R)-5,10-methylene-5,6,7,8-tetrahydrofolate = 7,8-dihydrofolate + dTMP. Its pathway is pyrimidine metabolism; dTTP biosynthesis. Its function is as follows. Catalyzes the reductive methylation of 2'-deoxyuridine-5'-monophosphate (dUMP) to 2'-deoxythymidine-5'-monophosphate (dTMP) while utilizing 5,10-methylenetetrahydrofolate (mTHF) as the methyl donor and reductant in the reaction, yielding dihydrofolate (DHF) as a by-product. This enzymatic reaction provides an intracellular de novo source of dTMP, an essential precursor for DNA biosynthesis. This Bacillus amyloliquefaciens (Bacillus velezensis) protein is Thymidylate synthase 2.